A 367-amino-acid polypeptide reads, in one-letter code: S-adenosylmethionine:tRNA ribosyltransferase-isomerase (367 aa).

Residues 150-182 (RHGEEEESSDEAISSQNPEIATESKRTPSNDDK) form a disordered region. Residues 171 to 182 (TESKRTPSNDDK) are compositionally biased toward basic and acidic residues.

This sequence belongs to the QueA family. Monomer.

It localises to the cytoplasm. It catalyses the reaction 7-aminomethyl-7-carbaguanosine(34) in tRNA + S-adenosyl-L-methionine = epoxyqueuosine(34) in tRNA + adenine + L-methionine + 2 H(+). Its pathway is tRNA modification; tRNA-queuosine biosynthesis. Its function is as follows. Transfers and isomerizes the ribose moiety from AdoMet to the 7-aminomethyl group of 7-deazaguanine (preQ1-tRNA) to give epoxyqueuosine (oQ-tRNA). The sequence is that of S-adenosylmethionine:tRNA ribosyltransferase-isomerase from Rickettsia felis (strain ATCC VR-1525 / URRWXCal2) (Rickettsia azadi).